Reading from the N-terminus, the 90-residue chain is Protein LIM3 (90 aa).

Residues 1–26 (MAAVKFLVCSVLLVVLATQSEIGLAQ) form the signal peptide. Disulfide bonds link C28–C65, C38–C54, C55–C80, and C67–C87.

It belongs to the A9/FIL1 family.

Its subcellular location is the secreted. The chain is Protein LIM3 (LIM3) from Lilium longiflorum (Trumpet lily).